The primary structure comprises 233 residues: Enolase-phosphatase E1 (233 aa).

Mg(2+)-binding residues include D6 and E8. Residues 128-129 (SS) and K163 each bind substrate. D188 is a Mg(2+) binding site.

It belongs to the HAD-like hydrolase superfamily. MasA/MtnC family. Monomer. It depends on Mg(2+) as a cofactor.

Its subcellular location is the cytoplasm. The protein localises to the nucleus. It catalyses the reaction 5-methylsulfanyl-2,3-dioxopentyl phosphate + H2O = 1,2-dihydroxy-5-(methylsulfanyl)pent-1-en-3-one + phosphate. It functions in the pathway amino-acid biosynthesis; L-methionine biosynthesis via salvage pathway; L-methionine from S-methyl-5-thio-alpha-D-ribose 1-phosphate: step 3/6. Its pathway is amino-acid biosynthesis; L-methionine biosynthesis via salvage pathway; L-methionine from S-methyl-5-thio-alpha-D-ribose 1-phosphate: step 4/6. Its function is as follows. Bifunctional enzyme that catalyzes the enolization of 2,3-diketo-5-methylthiopentyl-1-phosphate (DK-MTP-1-P) into the intermediate 2-hydroxy-3-keto-5-methylthiopentenyl-1-phosphate (HK-MTPenyl-1-P), which is then dephosphorylated to form the acireductone 1,2-dihydroxy-3-keto-5-methylthiopentene (DHK-MTPene). The polypeptide is Enolase-phosphatase E1 (Yarrowia lipolytica (strain CLIB 122 / E 150) (Yeast)).